Consider the following 809-residue polypeptide: Sucrose synthase 3 (809 aa).

Residues 277 to 755 (MVFNVVILSP…GLQRIYERYT (479 aa)) form a GT-B glycosyltransferase region.

This sequence belongs to the glycosyltransferase 1 family. Plant sucrose synthase subfamily. Detected in the whole plant with highest expression in developing siliques, vasculature of cotyledons and stomatal guard cells. Also detected throughout the mature parts of the root but not in the expanding zone.

It catalyses the reaction an NDP-alpha-D-glucose + D-fructose = a ribonucleoside 5'-diphosphate + sucrose + H(+). Functionally, sucrose-cleaving enzyme that provides UDP-glucose and fructose for various metabolic pathways. Modulates metabolic homeostasis and direct carbon towards starch synthesis in developing seeds. The polypeptide is Sucrose synthase 3 (SUS3) (Arabidopsis thaliana (Mouse-ear cress)).